Consider the following 252-residue polypeptide: Isoprenyl transferase (252 aa).

Residue aspartate 32 is part of the active site. Aspartate 32 is a binding site for Mg(2+). Residues 33 to 36 (GNGR), tryptophan 37, arginine 45, histidine 49, and 77 to 79 (STE) each bind substrate. Asparagine 80 acts as the Proton acceptor in catalysis. Substrate contacts are provided by residues tryptophan 81, arginine 83, arginine 200, and 206-208 (RLS). Position 219 (glutamate 219) interacts with Mg(2+).

Belongs to the UPP synthase family. Homodimer. Mg(2+) is required as a cofactor.

Its function is as follows. Catalyzes the condensation of isopentenyl diphosphate (IPP) with allylic pyrophosphates generating different type of terpenoids. The protein is Isoprenyl transferase of Listeria monocytogenes serovar 1/2a (strain ATCC BAA-679 / EGD-e).